A 136-amino-acid chain; its full sequence is MVKIRLKRAGRKKLPVYQIVVADARSPRDGKFLEVVGTYQPTAKPHAVTIKKDRIVYWMQTGAQPTATVNSLIRTTGLLYELRLKSMGRSEAEISAEMEKWQEHQAVRRQKRLALKSHRRSAKKEAEAKAATGGEA.

The span at 113 to 122 (LALKSHRRSA) shows a compositional bias: basic residues. The interval 113–136 (LALKSHRRSAKKEAEAKAATGGEA) is disordered.

Belongs to the bacterial ribosomal protein bS16 family.

The sequence is that of Small ribosomal subunit protein bS16 from Pelodictyon phaeoclathratiforme (strain DSM 5477 / BU-1).